We begin with the raw amino-acid sequence, 274 residues long: 2,3,4,5-tetrahydropyridine-2,6-dicarboxylate N-succinyltransferase (274 aa).

Substrate-binding residues include arginine 107 and aspartate 144.

This sequence belongs to the transferase hexapeptide repeat family. In terms of assembly, homotrimer.

It localises to the cytoplasm. It catalyses the reaction (S)-2,3,4,5-tetrahydrodipicolinate + succinyl-CoA + H2O = (S)-2-succinylamino-6-oxoheptanedioate + CoA. Its pathway is amino-acid biosynthesis; L-lysine biosynthesis via DAP pathway; LL-2,6-diaminopimelate from (S)-tetrahydrodipicolinate (succinylase route): step 1/3. This Paracoccus denitrificans (strain Pd 1222) protein is 2,3,4,5-tetrahydropyridine-2,6-dicarboxylate N-succinyltransferase.